A 157-amino-acid chain; its full sequence is uncharacterized protein (157 aa).

The 146-residue stretch at 9-154 (LLINYKTLDE…ETNLNAVTNE (146 aa)) folds into the N-acetyltransferase domain.

This is an uncharacterized protein from Bacillus cereus (strain G9842).